A 778-amino-acid polypeptide reads, in one-letter code: Tastin (778 aa).

The span at 1–11 shows a compositional bias: basic and acidic residues; that stretch reads MTTRQATKDPL. Residues 1-115 are disordered; the sequence is MTTRQATKDP…PGPPAQTEAP (115 aa). 3 positions are modified to phosphoserine: serine 16, serine 98, and serine 170. Residues 212–244 form a disordered region; sequence ISPSGPSFHPSTRPSFQELRRETAGSSRTSVSQ. The span at 235-244 shows a compositional bias: polar residues; the sequence is AGSSRTSVSQ. Serine 324, serine 334, serine 344, and serine 362 each carry phosphoserine. Threonine 363 is subject to Phosphothreonine. Serine 376 is subject to Phosphoserine. Disordered stretches follow at residues 406–425, 508–587, and 600–641; these read EGSGKPPVATPSGPHSNRTP, ECGE…AEPR, and PESS…RVEL. Over residues 513 to 523 the composition is skewed to pro residues; that stretch reads QPCPPAEPGPP. Repeat copies occupy residues 516-548, 549-581, 582-614, and 615-647. The interval 516-647 is 4 X 33 AA approximate tandem repeats; it reads PPAEPGPPEA…RVELGASEPC (132 aa). Residues 560–574 show a composition bias toward basic and acidic residues; the sequence is CRSEPEIPESSRQEQ. Over residues 612 to 622 the composition is skewed to pro residues; sequence EPCPPAEPGPL.

Directly binds bystin, and indirectly trophinin. As to expression, strong expression at implantation sites. Was exclusively localized to the apical side of the syncytiotrophoblast. Also found in macrophages.

It localises to the cytoplasm. Its function is as follows. Could be involved with bystin and trophinin in a cell adhesion molecule complex that mediates an initial attachment of the blastocyst to uterine epithelial cells at the time of the embryo implantation. The protein is Tastin (TROAP) of Homo sapiens (Human).